The following is a 331-amino-acid chain: Adenosine deaminase (331 aa).

Residues histidine 12 and histidine 14 each contribute to the Zn(2+) site. 3 residues coordinate substrate: histidine 14, aspartate 16, and glycine 170. Zn(2+) is bound at residue histidine 197. Glutamate 200 functions as the Proton donor in the catalytic mechanism. Aspartate 278 is a binding site for Zn(2+).

This sequence belongs to the metallo-dependent hydrolases superfamily. Adenosine and AMP deaminases family. Adenosine deaminase subfamily. Zn(2+) serves as cofactor.

It carries out the reaction adenosine + H2O + H(+) = inosine + NH4(+). The enzyme catalyses 2'-deoxyadenosine + H2O + H(+) = 2'-deoxyinosine + NH4(+). Its function is as follows. Catalyzes the hydrolytic deamination of adenosine and 2-deoxyadenosine. This is Adenosine deaminase from Shewanella woodyi (strain ATCC 51908 / MS32).